A 306-amino-acid chain; its full sequence is 4-hydroxy-3-methylbut-2-enyl diphosphate reductase (306 aa).

Position 12 (cysteine 12) interacts with [4Fe-4S] cluster. Positions 41 and 74 each coordinate (2E)-4-hydroxy-3-methylbut-2-enyl diphosphate. Dimethylallyl diphosphate-binding residues include histidine 41 and histidine 74. Isopentenyl diphosphate is bound by residues histidine 41 and histidine 74. Cysteine 96 provides a ligand contact to [4Fe-4S] cluster. Residue histidine 124 coordinates (2E)-4-hydroxy-3-methylbut-2-enyl diphosphate. A dimethylallyl diphosphate-binding site is contributed by histidine 124. Histidine 124 contributes to the isopentenyl diphosphate binding site. Catalysis depends on glutamate 126, which acts as the Proton donor. Position 164 (threonine 164) interacts with (2E)-4-hydroxy-3-methylbut-2-enyl diphosphate. Cysteine 194 serves as a coordination point for [4Fe-4S] cluster. The (2E)-4-hydroxy-3-methylbut-2-enyl diphosphate site is built by serine 222, serine 223, asparagine 224, and serine 266. Dimethylallyl diphosphate contacts are provided by serine 222, serine 223, asparagine 224, and serine 266. Isopentenyl diphosphate-binding residues include serine 222, serine 223, asparagine 224, and serine 266.

Belongs to the IspH family. Requires [4Fe-4S] cluster as cofactor.

The catalysed reaction is isopentenyl diphosphate + 2 oxidized [2Fe-2S]-[ferredoxin] + H2O = (2E)-4-hydroxy-3-methylbut-2-enyl diphosphate + 2 reduced [2Fe-2S]-[ferredoxin] + 2 H(+). It carries out the reaction dimethylallyl diphosphate + 2 oxidized [2Fe-2S]-[ferredoxin] + H2O = (2E)-4-hydroxy-3-methylbut-2-enyl diphosphate + 2 reduced [2Fe-2S]-[ferredoxin] + 2 H(+). It participates in isoprenoid biosynthesis; dimethylallyl diphosphate biosynthesis; dimethylallyl diphosphate from (2E)-4-hydroxy-3-methylbutenyl diphosphate: step 1/1. It functions in the pathway isoprenoid biosynthesis; isopentenyl diphosphate biosynthesis via DXP pathway; isopentenyl diphosphate from 1-deoxy-D-xylulose 5-phosphate: step 6/6. Functionally, catalyzes the conversion of 1-hydroxy-2-methyl-2-(E)-butenyl 4-diphosphate (HMBPP) into a mixture of isopentenyl diphosphate (IPP) and dimethylallyl diphosphate (DMAPP). Acts in the terminal step of the DOXP/MEP pathway for isoprenoid precursor biosynthesis. This is 4-hydroxy-3-methylbut-2-enyl diphosphate reductase from Ruthia magnifica subsp. Calyptogena magnifica.